Reading from the N-terminus, the 138-residue chain is Cysteine desulfuration protein SufE (138 aa).

The active-site Cysteine persulfide intermediate is cysteine 51.

It belongs to the SufE family. In terms of assembly, homodimer. Interacts with SufS.

It localises to the cytoplasm. It participates in cofactor biosynthesis; iron-sulfur cluster biosynthesis. Its function is as follows. Participates in cysteine desulfuration mediated by SufS. Cysteine desulfuration mobilizes sulfur from L-cysteine to yield L-alanine and constitutes an essential step in sulfur metabolism for biosynthesis of a variety of sulfur-containing biomolecules. Functions as a sulfur acceptor for SufS, by mediating the direct transfer of the sulfur atom from the S-sulfanylcysteine of SufS, an intermediate product of cysteine desulfuration process. This Salmonella choleraesuis (strain SC-B67) protein is Cysteine desulfuration protein SufE.